We begin with the raw amino-acid sequence, 116 residues long: NAD(P)H-quinone oxidoreductase subunit M (116 aa).

The protein belongs to the complex I NdhM subunit family. In terms of assembly, NDH-1 can be composed of about 15 different subunits; different subcomplexes with different compositions have been identified which probably have different functions.

The protein resides in the cellular thylakoid membrane. It carries out the reaction a plastoquinone + NADH + (n+1) H(+)(in) = a plastoquinol + NAD(+) + n H(+)(out). It catalyses the reaction a plastoquinone + NADPH + (n+1) H(+)(in) = a plastoquinol + NADP(+) + n H(+)(out). Its function is as follows. NDH-1 shuttles electrons from an unknown electron donor, via FMN and iron-sulfur (Fe-S) centers, to quinones in the respiratory and/or the photosynthetic chain. The immediate electron acceptor for the enzyme in this species is believed to be plastoquinone. Couples the redox reaction to proton translocation, and thus conserves the redox energy in a proton gradient. Cyanobacterial NDH-1 also plays a role in inorganic carbon-concentration. In Synechococcus sp. (strain RCC307), this protein is NAD(P)H-quinone oxidoreductase subunit M.